Consider the following 31-residue polypeptide: Protein YmiC (31 aa).

Residues 9–29 (WSWMGAFSLSMLFWAELLWII) traverse the membrane as a helical segment.

Its subcellular location is the cell inner membrane. The chain is Protein YmiC from Escherichia coli (strain K12).